The sequence spans 346 residues: MTDMWDVRITDTSLRDGSHHKRHQFTKDEVGAIVAALDAAGVPVIEVTHGDGLGGSSFNYGFSKTPEQELIKLAAATAKEARIAFLMLPGVGTKDDIKEARDNGGSICRIATHCTEADVSIQHFGLARELGLETVGFLMMAHTIAPEKLAAQARIMADAGCQCVYVVDSAGALVLDGVADRVSALVAELGEDAQVGFHGHENLGLGVANSVAAVRAGAKQIDGSCRRFGAGAGNAPVEALIGVFDKIGVKTGIDFFDIADAAEDVVRPAMPAECLLDRNALIMGYSGVYSSFLKHAVRQAERYGVPASALLHRAGQRKLIGGQEDQLIDIALEIKRELDSGAAVTH.

The 253-residue stretch at 7-259 (VRITDTSLRD…KTGIDFFDIA (253 aa)) folds into the Pyruvate carboxyltransferase domain. 15-16 (RD) lines the substrate pocket. Asp-16 is a Mn(2+) binding site. His-19 (proton acceptor) is an active-site residue. Substrate-binding residues include Ser-169 and His-198. Mn(2+)-binding residues include His-198 and His-200. A substrate-binding site is contributed by Tyr-289.

Belongs to the 4-hydroxy-2-oxovalerate aldolase family. Homodimer. Forms a heterotetramer composed of two aldolase (HsaF) and two dehydrogenase (HsaG) subunits. Mn(2+) is required as a cofactor.

The enzyme catalyses (S)-4-hydroxy-2-oxohexanoate = propanal + pyruvate. The catalysed reaction is (S)-4-hydroxy-2-oxopentanoate = acetaldehyde + pyruvate. Involved in cholesterol degradation. Catalyzes the retro-aldol cleavage of 4-hydroxy-2-oxohexanoate (HOHA) to pyruvate and propanal. Can also catalyze the cleavage of 4-hydroxy-2-oxopentanoate (HOPA) to pyruvate and acetaldehyde. The aldehydes produced by this reaction are directly channeled to the dehydrogenase HsaG. In Mycobacterium bovis (strain ATCC BAA-935 / AF2122/97), this protein is 4-hydroxy-2-oxohexanoate aldolase.